We begin with the raw amino-acid sequence, 96 residues long: Small ribosomal subunit protein bS6 (96 aa).

It belongs to the bacterial ribosomal protein bS6 family.

Binds together with bS18 to 16S ribosomal RNA. This Bacillus mycoides (strain KBAB4) (Bacillus weihenstephanensis) protein is Small ribosomal subunit protein bS6.